The sequence spans 608 residues: Serine/threonine-protein kinase ROP17 (608 aa).

The N-terminal stretch at 1-21 is a signal peptide; that stretch reads MELVLCFVIITISGVIRESSA. N-linked (GlcNAc...) asparagine glycosylation is present at Asn76. The Protein kinase domain occupies 283 to 579; that stretch reads LKKRGFLGGG…QQALEQFSLL (297 aa). Residues 289 to 297 and Lys312 contribute to the ATP site; that span reads LGGGGFGLV. The Proton acceptor role is filled by Asp436.

This sequence belongs to the protein kinase superfamily. Ser/Thr protein kinase family. In terms of assembly, interacts with ROP5; interaction with ROP5 does not affect kinase activity. Interacts with human BCL2; the interaction probably promotes BCL2 phosphorylation and degradation.

The protein localises to the secreted. It localises to the cytoplasmic vesicle. The protein resides in the secretory vesicle. It is found in the rhoptry. Its subcellular location is the parasitophorous vacuole membrane. The enzyme catalyses L-threonyl-[protein] + ATP = O-phospho-L-threonyl-[protein] + ADP + H(+). It catalyses the reaction L-seryl-[protein] + ATP = O-phospho-L-seryl-[protein] + ADP + H(+). Functionally, protein kinase. Virulence factor. Promotes migration of Toxoplasma-infected macrophages through collagen matrix, facilitating parasite transport through tissues and systemic dissemination. Plays a role in the translocation of dense granule effectors, such as GRA16 and GRA24, across the parasitophorous vacuole membrane in Toxoplasma-infected host cells. Phosphorylates mouse IRGB6 (TGTP1/TGTP2), an immunity-related GTPase (IRG) that protects mice from infection by certain intracellular pathogens; the phosphorylation leads to the disassembly of IRGB6 polymers into monomers and dimers. May modulate gene expression in human cells. Promotes autophagy in human cells via modulation of the BCL2-BECN1 pathway. The polypeptide is Serine/threonine-protein kinase ROP17 (Toxoplasma gondii).